The chain runs to 379 residues: Homoserine O-succinyltransferase (379 aa).

An AB hydrolase-1 domain is found at 51–360 (NAVLICHALS…DAPQGHDAFL (310 aa)). The active-site Nucleophile is the serine 157. Residue arginine 227 participates in substrate binding. Residues aspartate 323 and histidine 356 contribute to the active site. Aspartate 357 lines the substrate pocket.

The protein belongs to the AB hydrolase superfamily. MetX family. In terms of assembly, homodimer.

The protein resides in the cytoplasm. It carries out the reaction L-homoserine + succinyl-CoA = O-succinyl-L-homoserine + CoA. It functions in the pathway amino-acid biosynthesis; L-methionine biosynthesis via de novo pathway; O-succinyl-L-homoserine from L-homoserine: step 1/1. Requires MetW for activity. In terms of biological role, transfers a succinyl group from succinyl-CoA to L-homoserine, forming succinyl-L-homoserine. The sequence is that of Homoserine O-succinyltransferase from Pseudomonas syringae pv. syringae (strain B728a).